Here is a 230-residue protein sequence, read N- to C-terminus: Somatolactin (230 aa).

The N-terminal stretch at 1-23 is a signal peptide; sequence MIKTKVLQAWMGIWLCAVNGLLG. 3 cysteine pairs are disulfide-bonded: Cys28–Cys38, Cys87–Cys202, and Cys219–Cys227. A glycan (N-linked (GlcNAc...) asparagine) is linked at Asn177.

The protein belongs to the somatotropin/prolactin family.

It localises to the secreted. This is Somatolactin from Ictalurus punctatus (Channel catfish).